We begin with the raw amino-acid sequence, 749 residues long: NAD(P)H-quinone oxidoreductase subunit 5, chloroplastic (749 aa).

17 helical membrane passes run 9–29, 40–60, 89–109, 125–145, 147–167, 185–205, 219–239, 258–278, 290–312, 327–347, 354–374, 396–416, 425–445, 549–569, 608–628, 694–714, and 725–745; these read WIIPFLPLPVPMLIGLGLLLF, WAFQSVLLLSIVMIFSMNLSI, IDPLTSIMLILITTVGIMVLI, FAYMSFFSTSMLGLVTSSNLI, IYIFWELVGICSYLLIGFWFT, GDFGLLLGILGFYWITGSFEF, NEVNFVFVTLCAVLLFAGAVA, TPISALIHAATMVAAGIFLVA, IMNFISLIGIITVFLGATLALAQ, LGYMMLALGMGSYRSALFHLI, ALLFLGSGSVIHSMETLVGYC, TSFLLGTLSLCGIPPLACFWS, WLYSPIFAIIAWSTAGLTAFY, LFPILILILFTLFVGFLGIPF, VFSVSIASFGIFIAFFLYKPV, IIDGIPNGVCLISFFVAEVIK, and LFFYFSYVSIFLLIYYFLNVF.

It belongs to the complex I subunit 5 family. In terms of assembly, NDH is composed of at least 16 different subunits, 5 of which are encoded in the nucleus.

Its subcellular location is the plastid. The protein localises to the chloroplast thylakoid membrane. The catalysed reaction is a plastoquinone + NADH + (n+1) H(+)(in) = a plastoquinol + NAD(+) + n H(+)(out). It catalyses the reaction a plastoquinone + NADPH + (n+1) H(+)(in) = a plastoquinol + NADP(+) + n H(+)(out). NDH shuttles electrons from NAD(P)H:plastoquinone, via FMN and iron-sulfur (Fe-S) centers, to quinones in the photosynthetic chain and possibly in a chloroplast respiratory chain. The immediate electron acceptor for the enzyme in this species is believed to be plastoquinone. Couples the redox reaction to proton translocation, and thus conserves the redox energy in a proton gradient. The sequence is that of NAD(P)H-quinone oxidoreductase subunit 5, chloroplastic (ndhF) from Atractylodes lancea (Atractylodes japonica).